Reading from the N-terminus, the 253-residue chain is MDLNPSTFVLEIVNFLVLVWLLKRFLYQPVSAAIEERRRQIARTVAEARDTQTAAETLRMQYESRLADWESEKRQAREAFKQEIEAERQRALDELEKALDAEREKARVLIERQRRDMESDLERQALRLSRQFASRFLERLAGPEMEAALLRMFGEDLAAMSPEQWQALTRALEEQEHPEAEIASAFPLKPESCAELTEMIEARTGRAVAWRFREDPALICGIRLRAGHRVLAANVGEELKFFADGAENSLGGG.

Residues 9–27 (VLEIVNFLVLVWLLKRFLY) form a helical membrane-spanning segment.

The protein belongs to the ATPase B chain family. F-type ATPases have 2 components, F(1) - the catalytic core - and F(0) - the membrane proton channel. F(1) has five subunits: alpha(3), beta(3), gamma(1), delta(1), epsilon(1). F(0) has three main subunits: a(1), b(2) and c(10-14). The alpha and beta chains form an alternating ring which encloses part of the gamma chain. F(1) is attached to F(0) by a central stalk formed by the gamma and epsilon chains, while a peripheral stalk is formed by the delta and b chains.

Its subcellular location is the cell inner membrane. Its function is as follows. F(1)F(0) ATP synthase produces ATP from ADP in the presence of a proton or sodium gradient. F-type ATPases consist of two structural domains, F(1) containing the extramembraneous catalytic core and F(0) containing the membrane proton channel, linked together by a central stalk and a peripheral stalk. During catalysis, ATP synthesis in the catalytic domain of F(1) is coupled via a rotary mechanism of the central stalk subunits to proton translocation. In terms of biological role, component of the F(0) channel, it forms part of the peripheral stalk, linking F(1) to F(0). The chain is ATP synthase subunit b 2 from Methylococcus capsulatus (strain ATCC 33009 / NCIMB 11132 / Bath).